Here is a 171-residue protein sequence, read N- to C-terminus: Large ribosomal subunit protein uL10 (171 aa).

This sequence belongs to the universal ribosomal protein uL10 family. Part of the ribosomal stalk of the 50S ribosomal subunit. The N-terminus interacts with L11 and the large rRNA to form the base of the stalk. The C-terminus forms an elongated spine to which L12 dimers bind in a sequential fashion forming a multimeric L10(L12)X complex.

In terms of biological role, forms part of the ribosomal stalk, playing a central role in the interaction of the ribosome with GTP-bound translation factors. The protein is Large ribosomal subunit protein uL10 of Corynebacterium jeikeium (strain K411).